The chain runs to 99 residues: Integration host factor subunit alpha (99 aa).

Residues 49–71 form a disordered region; that stretch reads FGNFDLRDKNQRPGRNPKTGEDI.

Belongs to the bacterial histone-like protein family. Heterodimer of an alpha and a beta chain.

Its function is as follows. This protein is one of the two subunits of integration host factor, a specific DNA-binding protein that functions in genetic recombination as well as in transcriptional and translational control. This is Integration host factor subunit alpha from Shewanella frigidimarina (strain NCIMB 400).